The following is an 880-amino-acid chain: Chaperone protein ClpB 1 (880 aa).

The region spanning 6-148 (PNKFTDKAWE…EASIKAVRGS (143 aa)) is the Clp R domain. Repeat stretches follow at residues 9 to 74 (FTDK…TQRQ) and 85 to 148 (LGRS…VRGS). The interval 161-343 (EALQKFGRDL…RRFQQVYVDQ (183 aa)) is NBD1. An ATP-binding site is contributed by 208–215 (GEPGVGKT). Residues 344–554 (PSVENTISIL…IAEIVAKWTG (211 aa)) are linker. Residues 394–530 (IDLVDEAAAQ…KEAKLLELQS (137 aa)) are a coiled coil. The interval 564–775 (ERQKLLQLES…RVDDTILFHA (212 aa)) is NBD2. Residue 614–621 (GPTGVGKT) participates in ATP binding. A C-terminal region spans residues 776 to 880 (LSRSEMSHII…VKVSVTQITT (105 aa)).

It belongs to the ClpA/ClpB family. As to quaternary structure, homohexamer. The oligomerization is ATP-dependent.

It localises to the cytoplasm. Functionally, part of a stress-induced multi-chaperone system, it is involved in the recovery of the cell from heat-induced damage, in cooperation with DnaK, DnaJ and GrpE. Acts before DnaK, in the processing of protein aggregates. Protein binding stimulates the ATPase activity; ATP hydrolysis unfolds the denatured protein aggregates, which probably helps expose new hydrophobic binding sites on the surface of ClpB-bound aggregates, contributing to the solubilization and refolding of denatured protein aggregates by DnaK. This chain is Chaperone protein ClpB 1 (clpB1), found in Nostoc sp. (strain PCC 7120 / SAG 25.82 / UTEX 2576).